A 511-amino-acid chain; its full sequence is Cytochrome P450 26B1 (511 aa).

Residue Cys-440 participates in heme binding.

Belongs to the cytochrome P450 family. Requires heme as cofactor.

It is found in the endoplasmic reticulum membrane. The protein resides in the microsome membrane. It carries out the reaction all-trans-retinoate + reduced [NADPH--hemoprotein reductase] + O2 = all-trans-4-hydroxyretinoate + oxidized [NADPH--hemoprotein reductase] + H2O + H(+). It catalyses the reaction all-trans-retinoate + reduced [NADPH--hemoprotein reductase] + O2 = all-trans-18-hydroxyretinoate + oxidized [NADPH--hemoprotein reductase] + H2O + H(+). A cytochrome P450 monooxygenase involved in the metabolism of retinoates (RAs), the active metabolites of vitamin A, and critical signaling molecules in animals. RAs exist as at least four different isomers: all-trans-RA (atRA), 9-cis-RA, 13-cis-RA, and 9,13-dicis-RA, where atRA is considered to be the biologically active isomer, although 9-cis-RA and 13-cis-RA also have activity. Catalyzes the hydroxylation of atRA primarily at C-4 and C-18, thereby contributing to the regulation of atRA homeostasis and signaling. Hydroxylation of atRA limits its biological activity and initiates a degradative process leading to its eventual elimination. Involved in the convertion of atRA to all-trans-4-oxo-RA. Can oxidize all-trans-13,14-dihydroretinoate (DRA) to metabolites which could include all-trans-4-oxo-DRA, all-trans-4-hydroxy-DRA, all-trans-5,8-epoxy-DRA, and all-trans-18-hydroxy-DRA. Plays a role in skeletal development, both at the level of patterning and in the ossification of bone and the establishment of some synovial joints. The chain is Cytochrome P450 26B1 from Danio rerio (Zebrafish).